We begin with the raw amino-acid sequence, 452 residues long: Probable 1,4-beta-D-glucan cellobiohydrolase A (452 aa).

The N-terminal stretch at 1–17 (MHQRALLFSALAVAANA) is a signal peptide. N81 is a glycosylation site (N-linked (GlcNAc...) asparagine). The active-site Nucleophile is the E226. Residue E231 is the Proton donor of the active site. A glycan (N-linked (GlcNAc...) asparagine) is linked at N284. The tract at residues 405 to 431 (ADPSKPGVARGTCEHGAGDPENVESQH) is disordered.

This sequence belongs to the glycosyl hydrolase 7 (cellulase C) family.

It localises to the secreted. It carries out the reaction Hydrolysis of (1-&gt;4)-beta-D-glucosidic linkages in cellulose and cellotetraose, releasing cellobiose from the non-reducing ends of the chains.. Functionally, the biological conversion of cellulose to glucose generally requires three types of hydrolytic enzymes: (1) Endoglucanases which cut internal beta-1,4-glucosidic bonds; (2) Exocellobiohydrolases that cut the disaccharide cellobiose from the non-reducing end of the cellulose polymer chain; (3) Beta-1,4-glucosidases which hydrolyze the cellobiose and other short cello-oligosaccharides to glucose. The chain is Probable 1,4-beta-D-glucan cellobiohydrolase A (cbhA) from Aspergillus fumigatus (strain CBS 144.89 / FGSC A1163 / CEA10) (Neosartorya fumigata).